The primary structure comprises 289 residues: Acetyl-coenzyme A carboxylase carboxyl transferase subunit beta (289 aa).

One can recognise a CoA carboxyltransferase N-terminal domain in the interval 28 to 289 (VMTKCPECKK…QGGGMAVWQS (262 aa)). Zn(2+) contacts are provided by Cys32, Cys35, Cys51, and Cys54. A C4-type zinc finger spans residues 32-54 (CPECKKIMYTKELLKNLKVCVNC).

Belongs to the AccD/PCCB family. In terms of assembly, acetyl-CoA carboxylase is a heterohexamer composed of biotin carboxyl carrier protein (AccB), biotin carboxylase (AccC) and two subunits each of ACCase subunit alpha (AccA) and ACCase subunit beta (AccD). The cofactor is Zn(2+).

Its subcellular location is the cytoplasm. The catalysed reaction is N(6)-carboxybiotinyl-L-lysyl-[protein] + acetyl-CoA = N(6)-biotinyl-L-lysyl-[protein] + malonyl-CoA. The protein operates within lipid metabolism; malonyl-CoA biosynthesis; malonyl-CoA from acetyl-CoA: step 1/1. In terms of biological role, component of the acetyl coenzyme A carboxylase (ACC) complex. Biotin carboxylase (BC) catalyzes the carboxylation of biotin on its carrier protein (BCCP) and then the CO(2) group is transferred by the transcarboxylase to acetyl-CoA to form malonyl-CoA. The polypeptide is Acetyl-coenzyme A carboxylase carboxyl transferase subunit beta (Bacillus cereus (strain G9842)).